Reading from the N-terminus, the 136-residue chain is UPF0310 protein SMU_442 (136 aa).

This sequence belongs to the UPF0310 family.

In Streptococcus mutans serotype c (strain ATCC 700610 / UA159), this protein is UPF0310 protein SMU_442.